We begin with the raw amino-acid sequence, 618 residues long: Protease 4 (618 aa).

Residues 1–24 lie on the Cytoplasmic side of the membrane; the sequence is MRTLWRFIAGFFKWTWRLLNFVRE. Residues 25–45 traverse the membrane as a helical segment; sequence MVLNLFFIFLVLVGVGIWMQV. Residues 46–618 are Periplasmic-facing; sequence SGGDSKETAS…AFCLTCANMR (573 aa). The Proton donor/acceptor role is filled by K209. The Nucleophile role is filled by S409.

Belongs to the peptidase S49 family. As to quaternary structure, homotetramer.

The protein localises to the cell inner membrane. Inhibited by serine hydrolase inhibitor FP-biotin and by antipain. Digests cleaved signal peptides in vitro, its in vivo function is unknown. This activity is necessary to maintain proper secretion of mature proteins across the membrane. The protein is Protease 4 (sppA) of Escherichia coli (strain K12).